The primary structure comprises 155 residues: Ribosome maturation factor RimP (155 aa).

Belongs to the RimP family.

The protein localises to the cytoplasm. Its function is as follows. Required for maturation of 30S ribosomal subunits. This Staphylococcus aureus (strain bovine RF122 / ET3-1) protein is Ribosome maturation factor RimP.